The chain runs to 178 residues: UPF0228 protein MM_0401 (178 aa).

This sequence belongs to the UPF0228 family.

This is UPF0228 protein MM_0401 from Methanosarcina mazei (strain ATCC BAA-159 / DSM 3647 / Goe1 / Go1 / JCM 11833 / OCM 88) (Methanosarcina frisia).